The sequence spans 907 residues: Protein translocase subunit SecA (907 aa).

ATP-binding positions include Q87, 105–109, and D510; that span reads GEGKT. The Zn(2+) site is built by C892, C894, C903, and H904.

This sequence belongs to the SecA family. Monomer and homodimer. Part of the essential Sec protein translocation apparatus which comprises SecA, SecYEG and auxiliary proteins SecDF-YajC and YidC. Zn(2+) is required as a cofactor.

Its subcellular location is the cell inner membrane. It is found in the cytoplasm. The enzyme catalyses ATP + H2O + cellular proteinSide 1 = ADP + phosphate + cellular proteinSide 2.. Functionally, part of the Sec protein translocase complex. Interacts with the SecYEG preprotein conducting channel. Has a central role in coupling the hydrolysis of ATP to the transfer of proteins into and across the cell membrane, serving both as a receptor for the preprotein-SecB complex and as an ATP-driven molecular motor driving the stepwise translocation of polypeptide chains across the membrane. The protein is Protein translocase subunit SecA of Acinetobacter baumannii (strain AB0057).